Reading from the N-terminus, the 431-residue chain is Glutamate--tRNA ligase 1 (431 aa).

A 'HIGH' region motif is present at residues 6 to 16 (PSPTGDMHIGN). The 'KMSKS' region motif lies at 235–239 (KMSKR). ATP is bound at residue Lys-238.

It belongs to the class-I aminoacyl-tRNA synthetase family. Glutamate--tRNA ligase type 1 subfamily. In terms of assembly, monomer.

It is found in the cytoplasm. It carries out the reaction tRNA(Glu) + L-glutamate + ATP = L-glutamyl-tRNA(Glu) + AMP + diphosphate. Its function is as follows. Catalyzes the attachment of glutamate to tRNA(Glu) in a two-step reaction: glutamate is first activated by ATP to form Glu-AMP and then transferred to the acceptor end of tRNA(Glu). In Nitratiruptor sp. (strain SB155-2), this protein is Glutamate--tRNA ligase 1.